Here is a 395-residue protein sequence, read N- to C-terminus: Calcium sensing receptor, chloroplastic (395 aa).

A compositionally biased stretch (low complexity) spans 1–12 (MAPVPVSVSATL). Positions 1-27 (MAPVPVSVSATLAPPPAAPPKTTSRSW) are disordered. The transit peptide at 1 to 39 (MAPVPVSVSATLAPPPAAPPKTTSRSWERRAPADAAFAA) directs the protein to the chloroplast. Residues 40–182 (ASSVAGSAAL…TITSLGPEDY (143 aa)) lie on the Lumenal, thylakoid side of the membrane. A helical transmembrane segment spans residues 183–203 (VVAAGXAFLAYLLVPPVWSLV). The Stromal segment spans residues 204–395 (SSSLRGYKGD…TRKLLPGGVD (192 aa)). The region spanning 224–345 (TTQGYVLIDV…WAQSRLGTDS (122 aa)) is the Rhodanese domain. The residue at position 377 (threonine 377) is a Phosphothreonine.

Phosphorylated in both bundle sheath and mesophyll cells, under both low and high light regimes (70 vs 900 umol photons/m-2/s).

Its subcellular location is the plastid. It is found in the chloroplast thylakoid membrane. Modulates cytoplasmic Ca(2+) concentration and is crucial for proper stomatal regulation in response to elevated levels of external Ca(2+). May function by regulating concentrations of inositol 1,4,5-trisphosphate (IP3), which in turn triggers release of Ca(2+) from internal stores. May play a role in de-etiolation. This Zea mays (Maize) protein is Calcium sensing receptor, chloroplastic.